The primary structure comprises 419 residues: Zinc finger CCCH domain-containing protein 62 (419 aa).

The C3H1-type zinc finger occupies 89–116 (SLRKWVCKYWKDGKCKRGEQCQFLHSWS). 5 WD repeats span residues 129-168 (GHNK…CVHS), 210-247 (GVVG…ESDP), 256-293 (GHSG…CIMT), 296-335 (QHTG…KVVQ), and 383-419 (FSTH…GNKV).

This Arabidopsis thaliana (Mouse-ear cress) protein is Zinc finger CCCH domain-containing protein 62 (ZFWD4).